The chain runs to 260 residues: Adenosylcobinamide-GDP ribazoletransferase (260 aa).

Helical transmembrane passes span 42-62 (TWAL…VYKI), 68-88 (LTPN…TGAL), 118-137 (IGTY…WSAL), 144-166 (WLVT…AFMS), 180-200 (AGAP…LVLT), 201-221 (LALG…AGLI), and 237-257 (ILGA…AAFQ).

Belongs to the CobS family. The cofactor is Mg(2+).

It is found in the cell inner membrane. The enzyme catalyses alpha-ribazole + adenosylcob(III)inamide-GDP = adenosylcob(III)alamin + GMP + H(+). It catalyses the reaction alpha-ribazole 5'-phosphate + adenosylcob(III)inamide-GDP = adenosylcob(III)alamin 5'-phosphate + GMP + H(+). Its pathway is cofactor biosynthesis; adenosylcobalamin biosynthesis; adenosylcobalamin from cob(II)yrinate a,c-diamide: step 7/7. Functionally, joins adenosylcobinamide-GDP and alpha-ribazole to generate adenosylcobalamin (Ado-cobalamin). Also synthesizes adenosylcobalamin 5'-phosphate from adenosylcobinamide-GDP and alpha-ribazole 5'-phosphate. In Bradyrhizobium diazoefficiens (strain JCM 10833 / BCRC 13528 / IAM 13628 / NBRC 14792 / USDA 110), this protein is Adenosylcobinamide-GDP ribazoletransferase.